A 76-amino-acid chain; its full sequence is Small ribosomal subunit protein uS17 (76 aa).

Belongs to the universal ribosomal protein uS17 family. In terms of assembly, part of the 30S ribosomal subunit.

Functionally, one of the primary rRNA binding proteins, it binds specifically to the 5'-end of 16S ribosomal RNA. The polypeptide is Small ribosomal subunit protein uS17 (Anaplasma phagocytophilum (strain HZ)).